A 189-amino-acid polypeptide reads, in one-letter code: Ribosome maturation factor RimM (189 aa).

The region spanning 95–169 (DEDEFFQTDL…IIKVEPHAAG (75 aa)) is the PRC barrel domain. Positions 168–189 (AGLIADEHDNPPHESGKKPKKP) are disordered. A compositionally biased stretch (basic and acidic residues) spans 172 to 189 (ADEHDNPPHESGKKPKKP).

The protein belongs to the RimM family. As to quaternary structure, binds ribosomal protein uS19.

It is found in the cytoplasm. In terms of biological role, an accessory protein needed during the final step in the assembly of 30S ribosomal subunit, possibly for assembly of the head region. Essential for efficient processing of 16S rRNA. May be needed both before and after RbfA during the maturation of 16S rRNA. It has affinity for free ribosomal 30S subunits but not for 70S ribosomes. The protein is Ribosome maturation factor RimM of Brucella abortus (strain S19).